The primary structure comprises 199 residues: Probable thymidylate kinase (199 aa).

Residue 9–16 (GIDGCGKT) participates in ATP binding.

Belongs to the thymidylate kinase family.

It carries out the reaction dTMP + ATP = dTDP + ADP. The sequence is that of Probable thymidylate kinase from Methanococcus maripaludis (strain C7 / ATCC BAA-1331).